We begin with the raw amino-acid sequence, 1117 residues long: Cytospin-A (1117 aa).

Disordered regions lie at residues 1–176, 293–323, and 358–390; these read MKKA…NQIS, SLSP…GSVE, and SSDD…NASE. Composition is skewed to low complexity over residues 45 to 72 and 99 to 119; these read TTAS…TNGV and KIST…NKES. Composition is skewed to basic and acidic residues over residues 120–131 and 158–171; these read SSTRERLRERTR and TTTE…KSKS. A coiled-coil region spans residues 168 to 280; sequence KSKSDNQISD…LNALGFSLEQ (113 aa). The segment covering 293–303 has biased composition (polar residues); it reads SLSPEITPGNQ. Positions 358–377 are enriched in low complexity; the sequence is SSDDALDAPSSSESEGIPSI. Serine 384, serine 385, and serine 389 each carry phosphoserine. Coiled-coil stretches lie at residues 394–449 and 487–807; these read ACLT…MESL and RYME…RGRV. Positions 852–878 are disordered; sequence SQVPNPTAAAIPRTPLSPSPMKTPPAA. 3 positions are modified to phosphoserine: serine 868, serine 881, and serine 887. Positions 920–997 are disordered; the sequence is TSSTSRPASL…PTTRSRIREE (78 aa). Basic and acidic residues predominate over residues 946-956; it reads RSSEEMKRDIS. Residues 971–990 show a composition bias toward low complexity; sequence TTSPQLSLSSSPTASVTPTT. Residues 1011–1116 form the Calponin-homology (CH) domain; sequence GSKRNALLKW…YVTAIYKYFE (106 aa).

It belongs to the cytospin-A family. In terms of assembly, may interact with both microtubules and actin cytoskeleton.

The protein resides in the cytoplasm. It is found in the cytoskeleton. The protein localises to the spindle. It localises to the cell junction. Its subcellular location is the gap junction. Involved in cytokinesis and spindle organization. May play a role in actin cytoskeleton organization and microtubule stabilization and hence required for proper cell adhesion and migration. The protein is Cytospin-A (SPECC1L) of Canis lupus familiaris (Dog).